The chain runs to 291 residues: Small ribosomal subunit biogenesis GTPase RsgA (291 aa).

A CP-type G domain is found at 63-221; the sequence is ENELKRPPVS…IADTPGFSAL (159 aa). GTP contacts are provided by residues 112-115 and 164-172; these read TKKD and GQSGVGKST. Cys245, Cys250, His252, and Cys258 together coordinate Zn(2+).

It belongs to the TRAFAC class YlqF/YawG GTPase family. RsgA subfamily. As to quaternary structure, monomer. Associates with 30S ribosomal subunit, binds 16S rRNA. It depends on Zn(2+) as a cofactor.

The protein resides in the cytoplasm. Its function is as follows. One of several proteins that assist in the late maturation steps of the functional core of the 30S ribosomal subunit. Helps release RbfA from mature subunits. May play a role in the assembly of ribosomal proteins into the subunit. Circularly permuted GTPase that catalyzes slow GTP hydrolysis, GTPase activity is stimulated by the 30S ribosomal subunit. The sequence is that of Small ribosomal subunit biogenesis GTPase RsgA from Staphylococcus aureus (strain COL).